Consider the following 389-residue polypeptide: Radial spoke head protein 3 homolog B (389 aa).

Residues 63–106 are disordered; that stretch reads PTGQVPGQPDPLELQRQQQARRRALARKRAQEQLKPRTPEPVEG. Positions 81-90 are enriched in basic residues; it reads QARRRALARK. Positions 91–106 are enriched in basic and acidic residues; it reads RAQEQLKPRTPEPVEG. Thr143 carries the phosphothreonine; by MAPK1 modification. Residues 206-242 are a coiled coil; sequence YEEIRNVELAEVQRLEEQERRHREEKERRKKQQWEIV. The interval 332–389 is disordered; that stretch reads EAMPPGQKTNVINGPNTVTDPSVTTLHTQKPVLDRVSSQPAPSQERKPVEEGGHLMAE. The segment covering 338–359 has biased composition (polar residues); the sequence is QKTNVINGPNTVTDPSVTTLHT. Basic and acidic residues predominate over residues 375-389; the sequence is QERKPVEEGGHLMAE.

Belongs to the flagellar radial spoke RSP3 family. As to quaternary structure, component of the axonemal radial spoke 1 (RS1) and 2 (RS2) complexes, at least composed of spoke head proteins RSPH1, RSPH3B, RSPH9 and the cilia-specific component RSPH4A or sperm-specific component RSPH6A, spoke stalk proteins RSPH14, DNAJB13, DYDC1, ROPN1L and NME5, and the RS1 complex-specific anchor protein IQUB. Interacts with IQUB. Interacts with phosphorylated MAPK1. Interacts with MEK1. Interacts with PKA regulatory subunits PRKAR1A and PRKAR1B. Interacts with RSPH1. Interacts with RSPH4A. Interacts with RSPH6A. Interacts with RSPH9. Interacts with LRRC23. In terms of tissue distribution, expressed in ependymal cells (at protein level).

Its subcellular location is the cytoplasm. The protein resides in the cytoskeleton. The protein localises to the cilium axoneme. It localises to the flagellum axoneme. Functionally, functions as part of axonemal radial spoke complexes that play an important part in the motility of sperm and cilia. Functions as a protein kinase A-anchoring protein that scaffolds the cAMP-dependent protein kinase holoenzyme. May serve as a point of convergence for MAPK and PKA signaling in cilia. The polypeptide is Radial spoke head protein 3 homolog B (Rsph3b) (Mus musculus (Mouse)).